The following is a 1217-amino-acid chain: MTIPEKPQGVIWTDAQWQSIYETGQDVLVAAAAGSGKTAVLVERIIQKILRDGIDVDRLLVVTFTNLSAREMKHRVDQRIQEASIADPANAHLKNQRIKIHQAQISTLHSFCLKLIQQHYDVLNIDPNFRTSSEAENILLLEQTIDEVIEQHYDILDPAFIELTEQLSSDRSDDQFRMIIKQLYFFSVANPNPTNWLDQLVTPYEEEAQQAQLIQLLTDLSKVFITAAYDALNKAYDLFSMMDGVDKHLAVIEDERRLMGRVLEGGFIDISYLTGHEFGARLPNVTAKIKEANEMMVDALEDAKLQYKKYKSLIDKVKSDYFSREADDLKADMQQLAPRVKYLARIVKDVMSEFNRKKRSKNILDFSDYEHFALQILTNEDGSPSEIAESYRQHFHEILVDEYQDTNRVQEKILSCIKTGDEHNGNLFMVGDVKQSIYKFRQADPSLFIEKYQRFTLDGDGTGRRIDLSQNFRSRKEVLSTTNYIFKHMMDEQVGEVRYDEAAQLYYGAPYDESDHPVNLKVLVEADQEHSDLTGSEQEAHFIVEQVKDILEHQKVFDMKTGSYRSATYKDIVILERSFGQARNLQQAFKNEDIPFHVNSREGYFEQTEVRLVLSFLRAIDNPLQDIYLVGLMRSVIYQFKEDELAQIRILSPNDDYFYQSIVNYINDEAADAILVDKLKMFLSDIQSYQQYSKDHPVYQLIDKFYNDHYVIQYFSGLIGGRGRRANLYGLFNKAIEFENSSFRGLYQFIRFIDELIERGKDFGEENVVGPNDNVVRMMTIHSSKGLEFPFVIYSGLSKDFNKRDLKQPVILNQQFGLGMDYFDVDKEMAFPSLASVAYKAVAEKKLVSEEMRLVYVALTRAKEQLYLIGRVKNDKSLLELEQLSISGEHIAVNERLTSPNPFHLIYSILSKHQSASIPDDLKFEKDIAQIEDSSRPNVNISIIYFEDVSTETILDNDEYRSVNQLETMQNGNEDVKAQIKHQLDYQYPYVNDTKKPSKQSVSELKRQYETEESGTSYERVRQYRIGFSTYERPKFLSEQGKRKANEIGTLMHTVMQHLPFKKERISEVELHQYIDGLIDKHIIEADTKKDIRMDEIMTFINSELYSIIAEAEQVYRELPFVVNQALVDQLPQGDEDVSIIQGMIDLIFVKDGVHYFVDYKTDAFNRRRGMTDEEIGTQLKNKYKIQMKYYQNTLQTILNKEVKGYLYFFKFGTLQL.

The UvrD-like helicase ATP-binding domain maps to 10-475 (VIWTDAQWQS…IDLSQNFRSR (466 aa)). ATP is bound at residue 31 to 38 (AAAGSGKT). The region spanning 476–786 (KEVLSTTNYI…RMMTIHSSKG (311 aa)) is the UvrD-like helicase C-terminal domain.

Belongs to the helicase family. AddA subfamily. Heterodimer of AddA and AddB/RexB. Mg(2+) is required as a cofactor.

The enzyme catalyses Couples ATP hydrolysis with the unwinding of duplex DNA by translocating in the 3'-5' direction.. The catalysed reaction is ATP + H2O = ADP + phosphate + H(+). Its function is as follows. The heterodimer acts as both an ATP-dependent DNA helicase and an ATP-dependent, dual-direction single-stranded exonuclease. Recognizes the chi site generating a DNA molecule suitable for the initiation of homologous recombination. The AddA nuclease domain is required for chi fragment generation; this subunit has the helicase and 3' -&gt; 5' nuclease activities. The protein is ATP-dependent helicase/nuclease subunit A of Staphylococcus aureus (strain MRSA252).